A 329-amino-acid chain; its full sequence is Acetyl-coenzyme A carboxylase carboxyl transferase subunit alpha (329 aa).

A CoA carboxyltransferase C-terminal domain is found at 40–294 (QLETLAARRR…REAIERHLDD (255 aa)).

This sequence belongs to the AccA family. Acetyl-CoA carboxylase is a heterohexamer composed of biotin carboxyl carrier protein (AccB), biotin carboxylase (AccC) and two subunits each of ACCase subunit alpha (AccA) and ACCase subunit beta (AccD).

It is found in the cytoplasm. The catalysed reaction is N(6)-carboxybiotinyl-L-lysyl-[protein] + acetyl-CoA = N(6)-biotinyl-L-lysyl-[protein] + malonyl-CoA. The protein operates within lipid metabolism; malonyl-CoA biosynthesis; malonyl-CoA from acetyl-CoA: step 1/1. In terms of biological role, component of the acetyl coenzyme A carboxylase (ACC) complex. First, biotin carboxylase catalyzes the carboxylation of biotin on its carrier protein (BCCP) and then the CO(2) group is transferred by the carboxyltransferase to acetyl-CoA to form malonyl-CoA. The sequence is that of Acetyl-coenzyme A carboxylase carboxyl transferase subunit alpha from Prochlorococcus marinus (strain MIT 9303).